The chain runs to 172 residues: VQ motif-containing protein 17 (172 aa).

The VQ motif lies at 51-60 (FREIVQNLTG). Residues 60–97 (GKQDHHHHDLPHQKGLKRNPRSRRSHDHHEVHDMNKSH) form a disordered region. Over residues 61 to 71 (KQDHHHHDLPH) the composition is skewed to basic and acidic residues. A compositionally biased stretch (basic residues) spans 72–85 (QKGLKRNPRSRRSH). Basic and acidic residues predominate over residues 86–95 (DHHEVHDMNK).

The protein resides in the nucleus. Its function is as follows. May function as positive regulator of plant growth. The protein is VQ motif-containing protein 17 of Arabidopsis thaliana (Mouse-ear cress).